A 647-amino-acid polypeptide reads, in one-letter code: Threonine--tRNA ligase (647 aa).

The TGS domain occupies 1 to 61 (MIKITFPDGA…TEDGSIEIVT (61 aa)). A catalytic region spans residues 242-540 (DHRKLGKELD…LIENYKGAFP (299 aa)). Positions 336, 387, and 517 each coordinate Zn(2+).

This sequence belongs to the class-II aminoacyl-tRNA synthetase family. In terms of assembly, homodimer. Requires Zn(2+) as cofactor.

The protein localises to the cytoplasm. The catalysed reaction is tRNA(Thr) + L-threonine + ATP = L-threonyl-tRNA(Thr) + AMP + diphosphate + H(+). Its function is as follows. Catalyzes the attachment of threonine to tRNA(Thr) in a two-step reaction: L-threonine is first activated by ATP to form Thr-AMP and then transferred to the acceptor end of tRNA(Thr). Also edits incorrectly charged L-seryl-tRNA(Thr). This is Threonine--tRNA ligase from Streptococcus gordonii (strain Challis / ATCC 35105 / BCRC 15272 / CH1 / DL1 / V288).